The primary structure comprises 136 residues: Classical arabinogalactan protein 26 (136 aa).

The first 21 residues, 1–21, serve as a signal peptide directing secretion; that stretch reads MSVSLFTAFTVLSLCLHTSTS. Residues 38–95 are disordered; the sequence is APSSFSASTPAMSPDTSPLFPTPGSSEMSPSPSESSIMPTIPSSLSPPNPDAVTPDPL. Positions 40 to 53 are enriched in polar residues; the sequence is SSFSASTPAMSPDT. Residues 59–81 show a composition bias toward low complexity; it reads TPGSSEMSPSPSESSIMPTIPSS. Serine 108 carries the GPI-anchor amidated serine lipid modification. A propeptide spans 109 to 136 (removed in mature form); that stretch reads SSVCLVSSQLSSLLLVLLMLLLAFCSFF.

This sequence belongs to the classical AGP family. In terms of processing, O-glycosylated on the hydroxyproline residues.

The protein resides in the cell membrane. Its function is as follows. Proteoglycan that seems to be implicated in diverse developmental roles such as differentiation, cell-cell recognition, embryogenesis and programmed cell death. This chain is Classical arabinogalactan protein 26 (AGP26), found in Arabidopsis thaliana (Mouse-ear cress).